Consider the following 249-residue polypeptide: Beta-crystallin B1 (249 aa).

Residues 1 to 49 are disordered; the sequence is MSQPAVKASATAAVNPGPDGKGKGAPPPGPAPGSGPAQAPAQPMPAAKG. Serine 2 bears the N-acetylserine mark. The tract at residues 2–55 is N-terminal arm; the sequence is SQPAVKASATAAVNPGPDGKGKGAPPPGPAPGSGPAQAPAQPMPAAKGDLPPGS. Positions 34 to 49 are enriched in low complexity; the sequence is SGPAQAPAQPMPAAKG. Beta/gamma crystallin 'Greek key' domains lie at 56–95 and 96–140; these read YKLV…IVTS and GPWV…RPIR. Positions 141-145 are connecting peptide; it reads MDAQE. 2 Beta/gamma crystallin 'Greek key' domains span residues 146–187 and 188–230; these read HKLC…RVSS and GTWV…RRLR. Positions 232–249 are C-terminal arm; sequence RQWHREGCFPVLAAEPPK.

It belongs to the beta/gamma-crystallin family. As to quaternary structure, homo/heterodimer, or complexes of higher-order. The structure of beta-crystallin oligomers seems to be stabilized through interactions between the N-terminal arms. In terms of processing, specific cleavages in the N-terminal arm occur during lens maturation and give rise to truncated forms, leading to impaired oligomerization and protein insolubilization.

Functionally, crystallins are the dominant structural components of the vertebrate eye lens. In Sus scrofa (Pig), this protein is Beta-crystallin B1 (CRYBB1).